Reading from the N-terminus, the 242-residue chain is Ras-like protein family member 11A (242 aa).

Residues 17–241 are small GTPase-like; sequence ESSSDYLLPK…SSKAKASSAL (225 aa). GTP-binding positions include 34–41, 81–88, and 147–150; these read GAGCVGKS, DTPGGIQA, and NKGD.

Belongs to the small GTPase superfamily. Ras family. Interacts with UBF/UBTF.

The protein localises to the nucleus. It is found in the nucleolus. The enzyme catalyses GTP + H2O = GDP + phosphate + H(+). Its function is as follows. Regulator of rDNA transcription. Acts in cooperation UBF/UBTF and positively regulates RNA polymerase I transcription. This chain is Ras-like protein family member 11A, found in Mus musculus (Mouse).